The primary structure comprises 477 residues: Glutamyl-tRNA(Gln) amidotransferase subunit A (477 aa).

Residues Lys76 and Ser151 each act as charge relay system in the active site. The active-site Acyl-ester intermediate is the Ser175.

The protein belongs to the amidase family. GatA subfamily. Heterotrimer of A, B and C subunits.

The enzyme catalyses L-glutamyl-tRNA(Gln) + L-glutamine + ATP + H2O = L-glutaminyl-tRNA(Gln) + L-glutamate + ADP + phosphate + H(+). Its function is as follows. Allows the formation of correctly charged Gln-tRNA(Gln) through the transamidation of misacylated Glu-tRNA(Gln) in organisms which lack glutaminyl-tRNA synthetase. The reaction takes place in the presence of glutamine and ATP through an activated gamma-phospho-Glu-tRNA(Gln). In Prosthecochloris aestuarii (strain DSM 271 / SK 413), this protein is Glutamyl-tRNA(Gln) amidotransferase subunit A.